We begin with the raw amino-acid sequence, 61 residues long: DNA-directed RNA polymerase subunit Rpo6 (61 aa).

The protein belongs to the archaeal Rpo6/eukaryotic RPB6 RNA polymerase subunit family. In terms of assembly, part of the RNA polymerase complex.

It is found in the cytoplasm. It catalyses the reaction RNA(n) + a ribonucleoside 5'-triphosphate = RNA(n+1) + diphosphate. In terms of biological role, DNA-dependent RNA polymerase (RNAP) catalyzes the transcription of DNA into RNA using the four ribonucleoside triphosphates as substrates. The sequence is that of DNA-directed RNA polymerase subunit Rpo6 from Methanothermobacter thermautotrophicus (strain ATCC 29096 / DSM 1053 / JCM 10044 / NBRC 100330 / Delta H) (Methanobacterium thermoautotrophicum).